A 495-amino-acid chain; its full sequence is Lysine--tRNA ligase (495 aa).

The Mg(2+) site is built by Glu406 and Glu413.

Belongs to the class-II aminoacyl-tRNA synthetase family. In terms of assembly, homodimer. Mg(2+) is required as a cofactor.

Its subcellular location is the cytoplasm. The enzyme catalyses tRNA(Lys) + L-lysine + ATP = L-lysyl-tRNA(Lys) + AMP + diphosphate. In Leptospira interrogans serogroup Icterohaemorrhagiae serovar copenhageni (strain Fiocruz L1-130), this protein is Lysine--tRNA ligase.